A 133-amino-acid chain; its full sequence is MQPGGDMSALLAQAQQMQQKLLEAQQQLANSEVHGQAGGGLVKVVVKGSGEVIGVTIDPKVVDPDDIETLQDLIVGAMRDASQQVTKMAQERLGALAGAMRPPAPPAAPPGAPGMPGMPGMPGAPGAPPVPGI.

Residues 98 to 133 form a disordered region; the sequence is GAMRPPAPPAAPPGAPGMPGMPGMPGAPGAPPVPGI. Residues 102 to 113 show a composition bias toward pro residues; it reads PPAPPAAPPGAP.

It belongs to the YbaB/EbfC family. Homodimer.

It is found in the cytoplasm. Its subcellular location is the nucleoid. Binds to DNA and alters its conformation. May be involved in regulation of gene expression, nucleoid organization and DNA protection. The polypeptide is Nucleoid-associated protein Mb3743c (Mycobacterium bovis (strain ATCC BAA-935 / AF2122/97)).